Here is a 491-residue protein sequence, read N- to C-terminus: Cobyric acid synthase (491 aa).

Residues 246 to 435 (KIDVAVIKLP…IHGIFDGANF (190 aa)) form the GATase cobBQ-type domain. The Nucleophile role is filled by Cys327. Residue His427 is part of the active site.

Belongs to the CobB/CobQ family. CobQ subfamily.

Its pathway is cofactor biosynthesis; adenosylcobalamin biosynthesis. Its function is as follows. Catalyzes amidations at positions B, D, E, and G on adenosylcobyrinic A,C-diamide. NH(2) groups are provided by glutamine, and one molecule of ATP is hydrogenolyzed for each amidation. This is Cobyric acid synthase from Clostridium acetobutylicum (strain ATCC 824 / DSM 792 / JCM 1419 / IAM 19013 / LMG 5710 / NBRC 13948 / NRRL B-527 / VKM B-1787 / 2291 / W).